A 444-amino-acid polypeptide reads, in one-letter code: Ribulose bisphosphate carboxylase (444 aa).

Lys-163 serves as the catalytic Proton acceptor. Residue Lys-165 participates in substrate binding. The Mg(2+) site is built by Lys-189, Asp-191, and Glu-192. Residue Lys-189 is modified to N6-carboxylysine. The Proton acceptor role is filled by His-281. Substrate is bound by residues Arg-282, His-314, 367–369, and 389–392; these read SGG and QLGG.

This sequence belongs to the RuBisCO large chain family. Type III subfamily. In terms of assembly, homodimer or homodecamer. In contrast to form I RuBisCO, the form III RuBisCO is composed solely of large subunits. Mg(2+) is required as a cofactor.

The enzyme catalyses 2 (2R)-3-phosphoglycerate + 2 H(+) = D-ribulose 1,5-bisphosphate + CO2 + H2O. It catalyses the reaction D-ribulose 1,5-bisphosphate + O2 = 2-phosphoglycolate + (2R)-3-phosphoglycerate + 2 H(+). Its function is as follows. Catalyzes the addition of molecular CO(2) and H(2)O to ribulose 1,5-bisphosphate (RuBP), generating two molecules of 3-phosphoglycerate (3-PGA). Functions in an archaeal AMP degradation pathway, together with AMP phosphorylase and R15P isomerase. The chain is Ribulose bisphosphate carboxylase from Thermococcus onnurineus (strain NA1).